Reading from the N-terminus, the 254-residue chain is Thiazole synthase (254 aa).

The Schiff-base intermediate with DXP role is filled by Lys-95. Residues Gly-156, 182-183 (AG), and 204-205 (NT) each bind 1-deoxy-D-xylulose 5-phosphate.

Belongs to the ThiG family. Homotetramer. Forms heterodimers with either ThiH or ThiS.

It is found in the cytoplasm. It carries out the reaction [ThiS sulfur-carrier protein]-C-terminal-Gly-aminoethanethioate + 2-iminoacetate + 1-deoxy-D-xylulose 5-phosphate = [ThiS sulfur-carrier protein]-C-terminal Gly-Gly + 2-[(2R,5Z)-2-carboxy-4-methylthiazol-5(2H)-ylidene]ethyl phosphate + 2 H2O + H(+). It functions in the pathway cofactor biosynthesis; thiamine diphosphate biosynthesis. In terms of biological role, catalyzes the rearrangement of 1-deoxy-D-xylulose 5-phosphate (DXP) to produce the thiazole phosphate moiety of thiamine. Sulfur is provided by the thiocarboxylate moiety of the carrier protein ThiS. In vitro, sulfur can be provided by H(2)S. This Shewanella baltica (strain OS195) protein is Thiazole synthase.